The sequence spans 445 residues: Argininosuccinate lyase (445 aa).

It belongs to the lyase 1 family. Argininosuccinate lyase subfamily.

It localises to the cytoplasm. It catalyses the reaction 2-(N(omega)-L-arginino)succinate = fumarate + L-arginine. It functions in the pathway amino-acid biosynthesis; L-arginine biosynthesis; L-arginine from L-ornithine and carbamoyl phosphate: step 3/3. This Xylella fastidiosa (strain 9a5c) protein is Argininosuccinate lyase.